The primary structure comprises 184 residues: UPF0149 protein PputW619_5026 (184 aa).

It belongs to the UPF0149 family.

This Pseudomonas putida (strain W619) protein is UPF0149 protein PputW619_5026.